Here is a 39-residue protein sequence, read N- to C-terminus: Cytochrome b6-f complex subunit 5 (39 aa).

A helical membrane pass occupies residues 5-25 (LLCGIVLGLVPVTLLGLFVSA).

This sequence belongs to the PetG family. As to quaternary structure, the 4 large subunits of the cytochrome b6-f complex are cytochrome b6, subunit IV (17 kDa polypeptide, PetD), cytochrome f and the Rieske protein, while the 4 small subunits are PetG, PetL, PetM and PetN. The complex functions as a dimer.

The protein resides in the cellular thylakoid membrane. Functionally, component of the cytochrome b6-f complex, which mediates electron transfer between photosystem II (PSII) and photosystem I (PSI), cyclic electron flow around PSI, and state transitions. PetG is required for either the stability or assembly of the cytochrome b6-f complex. This Prochlorococcus marinus (strain NATL1A) protein is Cytochrome b6-f complex subunit 5.